A 100-amino-acid chain; its full sequence is Small ribosomal subunit protein uS14 (100 aa).

This sequence belongs to the universal ribosomal protein uS14 family. In terms of assembly, part of the 30S ribosomal subunit. Contacts proteins S3 and S10.

Functionally, binds 16S rRNA, required for the assembly of 30S particles and may also be responsible for determining the conformation of the 16S rRNA at the A site. The protein is Small ribosomal subunit protein uS14 of Thermosynechococcus vestitus (strain NIES-2133 / IAM M-273 / BP-1).